A 265-amino-acid chain; its full sequence is 4-hydroxy-tetrahydrodipicolinate reductase (265 aa).

Residues glycine 7–methionine 12 and aspartate 33 each bind NAD(+). Arginine 34 contributes to the NADP(+) binding site. NAD(+) contacts are provided by residues glycine 96–threonine 98 and alanine 120–methionine 123. Histidine 153 acts as the Proton donor/acceptor in catalysis. Histidine 154 is a binding site for (S)-2,3,4,5-tetrahydrodipicolinate. Lysine 157 acts as the Proton donor in catalysis. Glycine 163–threonine 164 lines the (S)-2,3,4,5-tetrahydrodipicolinate pocket.

It belongs to the DapB family.

It localises to the cytoplasm. It carries out the reaction (S)-2,3,4,5-tetrahydrodipicolinate + NAD(+) + H2O = (2S,4S)-4-hydroxy-2,3,4,5-tetrahydrodipicolinate + NADH + H(+). It catalyses the reaction (S)-2,3,4,5-tetrahydrodipicolinate + NADP(+) + H2O = (2S,4S)-4-hydroxy-2,3,4,5-tetrahydrodipicolinate + NADPH + H(+). It functions in the pathway amino-acid biosynthesis; L-lysine biosynthesis via DAP pathway; (S)-tetrahydrodipicolinate from L-aspartate: step 4/4. Its function is as follows. Catalyzes the conversion of 4-hydroxy-tetrahydrodipicolinate (HTPA) to tetrahydrodipicolinate. This is 4-hydroxy-tetrahydrodipicolinate reductase from Burkholderia orbicola (strain AU 1054).